We begin with the raw amino-acid sequence, 309 residues long: Olfactory receptor 6C4 (309 aa).

The Extracellular portion of the chain corresponds to 1 to 23 (MKNRTMFGEFILLGLTNQPELQV). Asn-3 carries an N-linked (GlcNAc...) asparagine glycan. The chain crosses the membrane as a helical span at residues 24–44 (MIFIFLFLTYMLSILGNLTII). At 45 to 52 (TLTLLDPH) the chain is on the cytoplasmic side. The helical transmembrane segment at 53–73 (LQTPMYFFLRNFSFLEISFTS) threads the bilayer. At 74 to 97 (IFIPRFLTSMTTGNKVISFAGCLT) the chain is on the extracellular side. A disulfide bridge links Cys-95 with Cys-187. Residues 98–118 (QYFFAIFLGATEFYLLASMSY) traverse the membrane as a helical segment. Residues 119-137 (DRYVAICKPLHYLTIMSSR) are Cytoplasmic-facing. The helical transmembrane segment at 138 to 158 (VCIQLVFCSWLGGFLAILPPI) threads the bilayer. Topologically, residues 159 to 195 (ILMTQVDFCVSNILNHYYCDYGPLVELACSDTSLLEL) are extracellular. Residues 196 to 215 (MVILLAVVTLMVTLVLVTLS) form a helical membrane-spanning segment. Residues 216–235 (YTYIIRTILRIPSAQQRTKA) are Cytoplasmic-facing. The chain crosses the membrane as a helical span at residues 236-256 (FSTCSSHMIVISLSYGSCMFM). Residues 257–269 (YINPSAKEGGAFN) lie on the Extracellular side of the membrane. The chain crosses the membrane as a helical span at residues 270–290 (KGIAVLITSVTPLLNPFIYTL). The Cytoplasmic portion of the chain corresponds to 291 to 309 (RNQQVKQAFKDSVKKIVKL).

Belongs to the G-protein coupled receptor 1 family.

The protein resides in the cell membrane. In terms of biological role, odorant receptor. The protein is Olfactory receptor 6C4 (OR6C4) of Homo sapiens (Human).